Consider the following 792-residue polypeptide: Lon protease (792 aa).

Residues D16–L211 enclose the Lon N-terminal domain. G361 to T368 is an ATP binding site. The Lon proteolytic domain occupies T597–P778. Residues S684 and K727 contribute to the active site.

The protein belongs to the peptidase S16 family. In terms of assembly, homohexamer. Organized in a ring with a central cavity.

The protein localises to the cytoplasm. It carries out the reaction Hydrolysis of proteins in presence of ATP.. Functionally, ATP-dependent serine protease that mediates the selective degradation of mutant and abnormal proteins as well as certain short-lived regulatory proteins. Required for cellular homeostasis and for survival from DNA damage and developmental changes induced by stress. Degrades polypeptides processively to yield small peptide fragments that are 5 to 10 amino acids long. Binds to DNA in a double-stranded, site-specific manner. This is Lon protease from Phenylobacterium zucineum (strain HLK1).